A 1377-amino-acid polypeptide reads, in one-letter code: DNA-directed RNA polymerase subunit beta' (1377 aa).

Cys70, Cys72, Cys85, and Cys88 together coordinate Zn(2+). Positions 460, 462, and 464 each coordinate Mg(2+). Zn(2+) contacts are provided by Cys808, Cys882, Cys889, and Cys892.

It belongs to the RNA polymerase beta' chain family. As to quaternary structure, the RNAP catalytic core consists of 2 alpha, 1 beta, 1 beta' and 1 omega subunit. When a sigma factor is associated with the core the holoenzyme is formed, which can initiate transcription. It depends on Mg(2+) as a cofactor. Zn(2+) serves as cofactor.

The catalysed reaction is RNA(n) + a ribonucleoside 5'-triphosphate = RNA(n+1) + diphosphate. Its function is as follows. DNA-dependent RNA polymerase catalyzes the transcription of DNA into RNA using the four ribonucleoside triphosphates as substrates. The chain is DNA-directed RNA polymerase subunit beta' from Geotalea daltonii (strain DSM 22248 / JCM 15807 / FRC-32) (Geobacter daltonii).